Consider the following 644-residue polypeptide: Exoribonuclease 2 (644 aa).

Positions Arg-189–Thr-516 constitute an RNB domain. Positions Asp-561–Val-643 constitute an S1 motif domain.

Belongs to the RNR ribonuclease family. RNase II subfamily.

It localises to the cytoplasm. It catalyses the reaction Exonucleolytic cleavage in the 3'- to 5'-direction to yield nucleoside 5'-phosphates.. Its function is as follows. Involved in mRNA degradation. Hydrolyzes single-stranded polyribonucleotides processively in the 3' to 5' direction. The protein is Exoribonuclease 2 of Yersinia pseudotuberculosis serotype IB (strain PB1/+).